Here is a 397-residue protein sequence, read N- to C-terminus: Cercosporin biosynthesis regulatory protein CTB8 (397 aa).

A DNA-binding region (zn(2)-C6 fungal-type) is located at residues 26 to 53 (CTHCSSQKIRCTKERPACARCVNKGLLC). 2 disordered regions span residues 62–92 (GTRR…DSVK) and 173–198 (AEAS…ATTH). Positions 74-87 (PETTISNAPTSSVP) are enriched in polar residues. Over residues 179-197 (PSSSSSPPSQRSDGGRATT) the composition is skewed to low complexity.

It is found in the nucleus. In terms of biological role, transcription regulator of the gene cluster that mediates the biosynthesis of cercosporin, a light-activated, non-host-selective toxin. The perylenequinone chromophore of cercosporin absorbs light energy to attain an electronically-activated triplet state and produces active oxygen species such as the hydroxyl radical, superoxide, hydrogen peroxide or singlet oxygen upon reaction with oxygen molecules. These reactive oxygen species cause damage to various cellular components including lipids, proteins and nucleic acids. The chain is Cercosporin biosynthesis regulatory protein CTB8 from Cercospora nicotianae (Barn spot disease fungus).